The sequence spans 1305 residues: ABC transporter FPSE_09185 (1305 aa).

Residue N28 is glycosylated (N-linked (GlcNAc...) asparagine). 6 helical membrane passes run 44–64 (FCVY…MPLM), 99–119 (LYIV…KFCF), 172–192 (RLGT…VAFT), 199–219 (IVSA…VPIY), 277–297 (IIGA…GLAF), and 312–332 (VGVV…FSYL). An ABC transmembrane type-1 1 domain is found at 48-348 (VVGALASIGV…ISQAMVAATE (301 aa)). The ABC transporter 1 domain maps to 372–663 (LIFKDVTFEY…ENGVYYSLVE (292 aa)). 407-414 (GPSGSGKS) contacts ATP. The tract at residues 434-454 (EAATPRSSKEGERDNHDERKY) is disordered. The span at 440–454 (SSKEGERDNHDERKY) shows a compositional bias: basic and acidic residues. Residues N468, N507, and N525 are each glycosylated (N-linked (GlcNAc...) asparagine). A run of 6 helical transmembrane segments spans residues 737-757 (FLLI…QAWL), 780-800 (GFMW…QCWI), 851-873 (GVFG…CLII), 877-899 (FGWK…SGFW), 964-984 (AVIF…ILWY), and 999-1019 (FMVS…ILGV). The region spanning 738–1025 (LLITIASMGV…ILGVAPSAAQ (288 aa)) is the ABC transmembrane type-1 2 domain. The segment at 1038-1057 (DSNRSSQEAEKSGPTVEDTD) is disordered. N1040, N1066, and N1075 each carry an N-linked (GlcNAc...) asparagine glycan. The ABC transporter 2 domain maps to 1062-1300 (IELCNVSFKY…RGIYWDMCQT (239 aa)). Position 1096–1103 (1096–1103 (GPSGCGKT)) interacts with ATP. N-linked (GlcNAc...) asparagine glycosylation is present at N1125.

It belongs to the ABC transporter superfamily. ABCB family. Multidrug resistance exporter (TC 3.A.1.201) subfamily.

The protein localises to the membrane. In terms of biological role, ABC transporter; part of the gene cluster that mediates the biosynthesis of the lipopeptides W493 A and B. W493 A and B consist of six amino acid residues D-allo-thr, L-Ala, D-Ala, L-Gln, D-Tyr, and L-Val/L-Ile linked to a 3-hydroxy-4-methyltetradecanoic acid polyketide chain. May be involved in excretion or internal transport of W493 A and B. The protein is ABC transporter FPSE_09185 of Fusarium pseudograminearum (strain CS3096) (Wheat and barley crown-rot fungus).